The chain runs to 202 residues: Guanylyl cyclase-activating protein 1 (202 aa).

Gly-2 carries the N-myristoyl glycine lipid modification. Asn-3 carries the post-translational modification Deamidated asparagine. EF-hand domains lie at 31–49 (SGQL…KNLS), 51–86 (SASQ…VLKG), 87–122 (KVEQ…IRTI), and 131–166 (SAEE…DQML). Residues Asp-64, Asn-66, Asp-68, Tyr-70, Glu-75, Asp-100, Asp-102, Asn-104, Cys-106, Glu-111, Asp-144, Asn-146, Asp-148, Glu-150, and Glu-155 each coordinate Ca(2+).

In terms of assembly, homodimer. In terms of tissue distribution, in the retina, expressed in rod photoreceptors (at protein level). Expressed in cone photoreceptors.

The protein localises to the membrane. The protein resides in the photoreceptor inner segment. It is found in the cell projection. It localises to the cilium. Its subcellular location is the photoreceptor outer segment. In terms of biological role, stimulates retinal guanylyl cyclase when free calcium ions concentration is low and inhibits guanylyl cyclase when free calcium ions concentration is elevated. This Ca(2+)-sensitive regulation of retinal guanylyl cyclase is a key event in recovery of the dark state of rod photoreceptors following light exposure. May be involved in cone photoreceptor light response and recovery of response in bright light. This chain is Guanylyl cyclase-activating protein 1 (Guca1a), found in Mus musculus (Mouse).